The primary structure comprises 354 residues: Chorismate synthase (354 aa).

Residue R48 coordinates NADP(+). Residues R126–S128, A278, K293–S297, and R319 contribute to the FMN site.

This sequence belongs to the chorismate synthase family. As to quaternary structure, homotetramer. Requires FMNH2 as cofactor.

The catalysed reaction is 5-O-(1-carboxyvinyl)-3-phosphoshikimate = chorismate + phosphate. It functions in the pathway metabolic intermediate biosynthesis; chorismate biosynthesis; chorismate from D-erythrose 4-phosphate and phosphoenolpyruvate: step 7/7. In terms of biological role, catalyzes the anti-1,4-elimination of the C-3 phosphate and the C-6 proR hydrogen from 5-enolpyruvylshikimate-3-phosphate (EPSP) to yield chorismate, which is the branch point compound that serves as the starting substrate for the three terminal pathways of aromatic amino acid biosynthesis. This reaction introduces a second double bond into the aromatic ring system. This Desulfosudis oleivorans (strain DSM 6200 / JCM 39069 / Hxd3) (Desulfococcus oleovorans) protein is Chorismate synthase.